Reading from the N-terminus, the 612-residue chain is Citryl-spermidine/3,4-dihydroxybenzoyl-citryl-spermidine:spermidine ligase (612 aa).

ATP is bound by residues 282–284 (SMR), K298, R310, Y390, and E461.

It belongs to the IucA/IucC family. In terms of assembly, homodimer.

The catalysed reaction is N(8)-citryl-spermidine + spermidine + ATP = N(8),N'(8)-citryl-bis(spermidine) + AMP + diphosphate + H(+). The enzyme catalyses N(1)-(3,4-dihydroxybenzoyl)-N(8)-citryl-spermidine + spermidine + ATP = N(1)-(3,4-dihydroxybenzoyl)-N(8),N'(8)-citryl-bis(spermidine) + AMP + diphosphate + H(+). The protein operates within siderophore biosynthesis; petrobactin biosynthesis. In terms of biological role, involved in the biosynthesis of petrobactin, a catecholate siderophore that functions in both iron acquisition and virulence. Catalyzes the ATP-dependent condensation of spermidine with N(8)-citryl-spermidine or N(1)-(3,4-dihydroxbenzoyl)-N(8)-citryl-spermidine, two intermediates in petrobactin biosynthesis pathway. The polypeptide is Citryl-spermidine/3,4-dihydroxybenzoyl-citryl-spermidine:spermidine ligase (Bacillus anthracis).